We begin with the raw amino-acid sequence, 102 residues long: Cytochrome c oxidase subunit 6a, mitochondrial (102 aa).

The N-terminal 36 residues, 1 to 36, are a transit peptide targeting the mitochondrion; that stretch reads MATAIVRSALSRAVTRAAPKTSVAPKRNFSSSAGHD.

This sequence belongs to the cytochrome c oxidase subunit 6A (TC 3.D.4.11) family.

The protein localises to the mitochondrion inner membrane. This protein is one of the nuclear-coded polypeptide chains of cytochrome c oxidase, the terminal oxidase in mitochondrial electron transport. This Arabidopsis thaliana (Mouse-ear cress) protein is Cytochrome c oxidase subunit 6a, mitochondrial (COX6A).